A 119-amino-acid polypeptide reads, in one-letter code: Flagellar transcriptional regulator FlhD (119 aa).

This sequence belongs to the FlhD family. Homodimer; disulfide-linked. Forms a heterohexamer composed of two FlhC and four FlhD subunits. Each FlhC binds a FlhD dimer, forming a heterotrimer, and a hexamer assembles by dimerization of two heterotrimers.

The protein resides in the cytoplasm. Functionally, functions in complex with FlhC as a master transcriptional regulator that regulates transcription of several flagellar and non-flagellar operons by binding to their promoter region. Activates expression of class 2 flagellar genes, including fliA, which is a flagellum-specific sigma factor that turns on the class 3 genes. Also regulates genes whose products function in a variety of physiological pathways. The polypeptide is Flagellar transcriptional regulator FlhD (Serratia marcescens).